Here is a 143-residue protein sequence, read N- to C-terminus: Flagellar assembly factor FliW (143 aa).

It belongs to the FliW family. In terms of assembly, interacts with flagellin in a 1:1 complex. Two molecules interact with each CsrA dimer; cannot interact with both flagellin and CsrA simultaneously. Has a higher affinity for CsrA than for flagellin. Interacts directly with flagellin (hag), forms a 3-way complex of Hag, FliS and FliW in which Flis and FliW do not directly interact. Interaction with Hag may occur via the C-terminus of Hag.

It is found in the cytoplasm. Acts as an anti-CsrA protein, binds CsrA and prevents it from repressing translation of its target genes, one of which is flagellin. Binds to flagellin (hag), which is implicated in polymerization, and participates in the assembly of the flagellum. An antagonist to translational regulator CsrA, it binds CsrA at an allosteric site and non-competitively inhibits CsrA binding to hag RNA. Partner switching by flagellin between FliW and CsrA provides a flagellar assembly checkpoint to tightly control the timing of flagellin synthesis. Flagellin binds to assembly factor FliW, freeing translation regulator CsrA to repress translation of the flagellin mRNA. When the flagellar hook is assembled flagellin is secreted, depleting intracellular flagellin, which frees FliW to interact with CsrA and inhibits CsrA binding to mRNA. This derepresses flagellin translation and provides protein for flagellar assembly. Once the flagellar filament is completed cytoplasmic flagellin levels rise and CsrA translation repression of flagellin reinitiates. Binds to CsrA and displaces it from hag mRNA. Binds to hag mRNA itself, but only at much higher concentrations than those required to displace CsrA. The chain is Flagellar assembly factor FliW from Bacillus subtilis (strain 168).